A 326-amino-acid polypeptide reads, in one-letter code: Putative ankyrin repeat protein L25 (326 aa).

ANK repeat units follow at residues 11–40 (RSEY…DLNV), 42–65 (KLFY…NIHV), 66–95 (DDEF…DIHV), 96–125 (NDDA…DIHA), 127–154 (NELV…DIHA), 155–184 (EDDE…NFRA), 185–214 (ENDY…DIHA), 216–244 (DEYA…DIHA), 246–274 (NDYG…NIHA), and 275–304 (KDDY…NIHA).

This is Putative ankyrin repeat protein L25 from Acanthamoeba polyphaga mimivirus (APMV).